Here is a 274-residue protein sequence, read N- to C-terminus: Formamidopyrimidine-DNA glycosylase (274 aa).

Residue Pro2 is the Schiff-base intermediate with DNA of the active site. Glu3 functions as the Proton donor in the catalytic mechanism. The active-site Proton donor; for beta-elimination activity is Lys57. His92, Arg111, and Lys152 together coordinate DNA. The FPG-type zinc finger occupies 237-271 (QVYGRKGEECRECGTLIQAKVIGQRNSYFCPDCQP). The active-site Proton donor; for delta-elimination activity is the Arg261.

It belongs to the FPG family. As to quaternary structure, monomer. Zn(2+) is required as a cofactor.

It carries out the reaction Hydrolysis of DNA containing ring-opened 7-methylguanine residues, releasing 2,6-diamino-4-hydroxy-5-(N-methyl)formamidopyrimidine.. The enzyme catalyses 2'-deoxyribonucleotide-(2'-deoxyribose 5'-phosphate)-2'-deoxyribonucleotide-DNA = a 3'-end 2'-deoxyribonucleotide-(2,3-dehydro-2,3-deoxyribose 5'-phosphate)-DNA + a 5'-end 5'-phospho-2'-deoxyribonucleoside-DNA + H(+). Its function is as follows. Involved in base excision repair of DNA damaged by oxidation or by mutagenic agents. Acts as a DNA glycosylase that recognizes and removes damaged bases. Has a preference for oxidized purines, such as 7,8-dihydro-8-oxoguanine (8-oxoG). Has AP (apurinic/apyrimidinic) lyase activity and introduces nicks in the DNA strand. Cleaves the DNA backbone by beta-delta elimination to generate a single-strand break at the site of the removed base with both 3'- and 5'-phosphates. In Haemophilus ducreyi (strain 35000HP / ATCC 700724), this protein is Formamidopyrimidine-DNA glycosylase.